The sequence spans 174 residues: 3-hydroxydecanoyl-[acyl-carrier-protein] dehydratase (174 aa).

The active site involves H73.

This sequence belongs to the thioester dehydratase family. FabA subfamily. Homodimer.

It localises to the cytoplasm. The catalysed reaction is a (3R)-hydroxyacyl-[ACP] = a (2E)-enoyl-[ACP] + H2O. It catalyses the reaction (3R)-hydroxydecanoyl-[ACP] = (2E)-decenoyl-[ACP] + H2O. It carries out the reaction (2E)-decenoyl-[ACP] = (3Z)-decenoyl-[ACP]. It functions in the pathway lipid metabolism; fatty acid biosynthesis. Functionally, necessary for the introduction of cis unsaturation into fatty acids. Catalyzes the dehydration of (3R)-3-hydroxydecanoyl-ACP to E-(2)-decenoyl-ACP and then its isomerization to Z-(3)-decenoyl-ACP. Can catalyze the dehydratase reaction for beta-hydroxyacyl-ACPs with saturated chain lengths up to 16:0, being most active on intermediate chain length. This Teredinibacter turnerae (strain ATCC 39867 / T7901) protein is 3-hydroxydecanoyl-[acyl-carrier-protein] dehydratase.